The sequence spans 163 residues: Nucleotide-binding protein APL_1231 (163 aa).

This sequence belongs to the YajQ family.

Functionally, nucleotide-binding protein. This Actinobacillus pleuropneumoniae serotype 5b (strain L20) protein is Nucleotide-binding protein APL_1231.